Reading from the N-terminus, the 37-residue chain is Large ribosomal subunit protein bL36c (37 aa).

This sequence belongs to the bacterial ribosomal protein bL36 family.

Its subcellular location is the plastid. It is found in the chloroplast. The chain is Large ribosomal subunit protein bL36c from Ostreococcus tauri.